The primary structure comprises 297 residues: CCAAT/enhancer-binding protein beta (297 aa).

The segment at 1–22 (MHRLLAWDAACLPPPPAAFRPM) is required for Lys-134 sumoylation. R3 bears the Asymmetric dimethylarginine; by CARM1 mark. Residues 22–105 (MEVANFYYEP…YGAKPSKKPS (84 aa)) form a required for MYC transcriptional repression region. K39 is modified (N6-acetyllysine; alternate). K39 carries the post-translational modification N6-methylated lysine; alternate. N6-acetyllysine; by KAT2A and KAT2B is present on residues K99 and K102. At K103 the chain carries N6-acetyllysine; by KAT2A and KAT2B; alternate. Residue K103 forms a Glycyl lysine isopeptide (Lys-Gly) (interchain with G-Cter in SUMO2); alternate linkage. S105 is modified (phosphoserine; by RPS6KA1 and PKC/PRKCA). A Glycyl lysine isopeptide (Lys-Gly) (interchain with G-Cter in SUMO2); alternate cross-link involves residue K134. K134 participates in a covalent cross-link: Glycyl lysine isopeptide (Lys-Gly) (interchain with G-Cter in SUMO); alternate. Residue K145 forms a Glycyl lysine isopeptide (Lys-Gly) (interchain with G-Cter in SUMO2) linkage. The disordered stretch occupies residues 172 to 201 (SGSSGSLSTSSSSSPPGTPSPADAKAAPAA). At T180 the chain carries Phosphothreonine; by GSK3-beta. 2 O-linked (GlcNAc) serine glycosylation sites follow: S181 and S182. S185 carries the post-translational modification Phosphoserine; by GSK3-beta. At T189 the chain carries Phosphothreonine; by RPS6KA1, CDK2 and MAPK. Residues K212 and K214 each participate in a glycyl lysine isopeptide (Lys-Gly) (interchain with G-Cter in SUMO2) cross-link. Residues 223 to 286 (SDEYKMRRER…STLRNLFKQL (64 aa)) form the bZIP domain. The segment at 227-247 (KMRRERNNIAVRKSRDKAKMR) is basic motif. The residue at position 240 (S240) is a Phosphoserine; by PKC/PRKCA. The segment at 249–256 (LETQHKVL) is leucine-zipper. Phosphoserine; by CaMK2 is present on S277. K284 is covalently cross-linked (Glycyl lysine isopeptide (Lys-Gly) (interchain with G-Cter in SUMO2)).

This sequence belongs to the bZIP family. C/EBP subfamily. Binds DNA as a homodimer and as a heterodimer. Interacts with MYB; within the complex, MYB and CEBPB bind to different promoter regions. Interacts with ATF4. Binds DNA as a heterodimer with ATF4. Can form stable heterodimers with CEBPA, CEBPD, CEBPE and CEBPG. Interacts with SIX1. Isoform 2 and isoform 3 also form heterodimers. Interacts with TRIM28 and PTGES2. Interacts with PRDM16. Interacts with CCDC85B. Forms a complex with THOC5. Interacts with ZNF638; this interaction increases transcriptional activation. Interacts with CIDEA and CIDEC; these interactions increase transcriptional activation of a subset of CEBPB downstream target genes. Interacts with DDIT3/CHOP. Interacts with EP300; recruits EP300 to chromatin. Interacts with RORA; the interaction disrupts interaction with EP300. Interacts (not methylated) with MED23, MED26, SMARCA2, SMARCB1 and SMARCC1. Interacts with KAT2A and KAT2B. Interacts with ATF5; EP300 is required for ATF5 and CEBPB interaction and DNA binding. Interacts with NFE2L1; the heterodimer represses expression of DSPP during odontoblast differentiation. Phosphorylated at Thr-189 by MAPK and CDK2, serves to prime phosphorylation at Thr-180 and Ser-185 by GSK3B and acquire DNA-binding as well as transactivation activities, required to induce adipogenesis. MAPK and CDK2 act sequentially to maintain Thr-189 in the primed phosphorylated state during mitotical cloning expansion and thereby progression of terminal differentiation. Phosphorylation at Ser-105 enhances transactivation activity. Phosphorylation at Ser-277 in response to calcium increases transactivation activity. Phosphorylated at Thr-189 by RPS6KA1. Post-translationally, methylated. Methylation at Arg-3 by CARM1 and at Lys-39 by EHMT2 inhibit transactivation activity. Methylation is probably inhibited by phosphorylation at Thr-189. In terms of processing, sumoylated by polymeric chains of SUMO2 or SUMO3. Sumoylation at Lys-134 is required for inhibition of T-cells proliferation. In adipocytes, sumoylation at Lys-134 by PIAS1 leads to ubiquitination and subsequent proteasomal degradation. Desumoylated by SENP2, which abolishes ubiquitination and stabilizes protein levels. Ubiquitinated, leading to proteasomal degradation. Post-translationally, O-glycosylated, glycosylation at Ser-181 and Ser-182 prevents phosphorylation on Thr-189, Ser-185 and Thr-180 and DNA binding activity which delays the adipocyte differentiation program. In terms of processing, acetylated. Acetylation at Lys-39 is an important and dynamic regulatory event that contributes to its ability to transactivate target genes, including those associated with adipogenesis and adipocyte function. Deacetylation by HDAC1 represses its transactivation activity. Acetylated by KAT2A and KAT2B within a cluster of lysine residues between amino acids 99-103, this acetylation is strongly induced by glucocorticoid treatment and enhances transactivation activity. As to expression, liver and lung.

Its subcellular location is the nucleus. The protein resides in the cytoplasm. Functionally, important transcription factor regulating the expression of genes involved in immune and inflammatory responses. Also plays a significant role in adipogenesis, as well as in the gluconeogenic pathway, liver regeneration, and hematopoiesis. The consensus recognition site is 5'-T[TG]NNGNAA[TG]-3'. Its functional capacity is governed by protein interactions and post-translational protein modifications. During early embryogenesis, plays essential and redundant roles with CEBPA. Has a promitotic effect on many cell types such as hepatocytes and adipocytes but has an antiproliferative effect on T-cells by repressing MYC expression, facilitating differentiation along the T-helper 2 lineage. Binds to regulatory regions of several acute-phase and cytokines genes and plays a role in the regulation of acute-phase reaction and inflammation. Also plays a role in intracellular bacteria killing. During adipogenesis, is rapidly expressed and, after activation by phosphorylation, induces CEBPA and PPARG, which turn on the series of adipocyte genes that give rise to the adipocyte phenotype. The delayed transactivation of the CEBPA and PPARG genes by CEBPB appears necessary to allow mitotic clonal expansion and thereby progression of terminal differentiation. Essential for female reproduction because of a critical role in ovarian follicle development. Restricts osteoclastogenesis: together with NFE2L1; represses expression of DSPP during odontoblast differentiation. Its function is as follows. Essential for gene expression induction in activated macrophages. Plays a major role in immune responses such as CD4(+) T-cell response, granuloma formation and endotoxin shock. Not essential for intracellular bacteria killing. In terms of biological role, acts as a dominant negative through heterodimerization with isoform 2. Promotes osteoblast differentiation and osteoclastogenesis. This Rattus norvegicus (Rat) protein is CCAAT/enhancer-binding protein beta.